The following is a 474-amino-acid chain: Cysteine--tRNA ligase (474 aa).

Residue C27 participates in Zn(2+) binding. Positions 29–39 (ITPYDHMHVGH) match the 'HIGH' region motif. C213, H238, and E242 together coordinate Zn(2+). The 'KMSKS' region signature appears at 271 to 275 (KMSKS). K274 is an ATP binding site.

Belongs to the class-I aminoacyl-tRNA synthetase family. Zn(2+) serves as cofactor.

It localises to the cytoplasm. It catalyses the reaction tRNA(Cys) + L-cysteine + ATP = L-cysteinyl-tRNA(Cys) + AMP + diphosphate. In Pyrobaculum neutrophilum (strain DSM 2338 / JCM 9278 / NBRC 100436 / V24Sta) (Thermoproteus neutrophilus), this protein is Cysteine--tRNA ligase.